A 128-amino-acid chain; its full sequence is Glycine cleavage system H protein (128 aa).

Residues 24 to 106 (VYSVGITEHA…YTDGWLFSIK (83 aa)) enclose the Lipoyl-binding domain. The residue at position 65 (Lys65) is an N6-lipoyllysine.

It belongs to the GcvH family. In terms of assembly, the glycine cleavage system is composed of four proteins: P, T, L and H. (R)-lipoate is required as a cofactor.

The glycine cleavage system catalyzes the degradation of glycine. The H protein shuttles the methylamine group of glycine from the P protein to the T protein. In Yersinia pseudotuberculosis serotype O:1b (strain IP 31758), this protein is Glycine cleavage system H protein.